Consider the following 280-residue polypeptide: Ataxin-3 homolog (280 aa).

Positions 7-187 constitute a Josephin domain; it reads GGMLYHEVQE…QECPMSSSSE (181 aa). Cys-20 acts as the Nucleophile in catalysis. Residue His-126 is the Proton acceptor of the active site. Asp-141 is an active-site residue. 2 stretches are compositionally biased toward polar residues: residues 183–194 and 221–232; these read SSSSEASNSFGQ and DNVNQQRRNQAL. The interval 183–240 is disordered; that stretch reads SSSSEASNSFGQWLSPEDAERIRKNTSSGSSARNKRSNDNVNQQRRNQALSREEVQAF. A UIM domain is found at 243–262; that stretch reads MEDDDLKAAIAASLLDASAA.

The protein localises to the nucleus. The enzyme catalyses Thiol-dependent hydrolysis of ester, thioester, amide, peptide and isopeptide bonds formed by the C-terminal Gly of ubiquitin (a 76-residue protein attached to proteins as an intracellular targeting signal).. Functionally, interacts with key regulators of transcription and represses transcription. Acts as a histone-binding protein that regulates transcription. Acts as a deubiquitinating enzyme. The protein is Ataxin-3 homolog of Arabidopsis thaliana (Mouse-ear cress).